The sequence spans 1206 residues: Phosphoglucan, water dikinase, chloroplastic (1206 aa).

Disordered regions lie at residues 1–20 and 52–71; these read MTSL…PRRG and RSAA…DSSK. Residues 1–56 constitute a chloroplast transit peptide; the sequence is MTSLRPLETSLSIGGRPRRGLVLPPPGVGAGVLLRRGAMALPGRRGFACRGRSAAS. Residues 67–168 enclose the CBM20 domain; it reads RDSSKQPLVH…KFDIVCHWNR (102 aa). His-776 functions as the Tele-phosphohistidine intermediate in the catalytic mechanism.

This sequence belongs to the PEP-utilizing enzyme family. In terms of assembly, homodimer. Mg(2+) is required as a cofactor.

The protein resides in the plastid. Its subcellular location is the chloroplast. It catalyses the reaction [(1-&gt;4)-6-phospho-alpha-D-glucosyl](n) + n ATP + n H2O = [(1-&gt;4)-3,6-bisphospho-alpha-D-glucosyl](n) + n AMP + n phosphate + 2n H(+). In terms of biological role, mediates the incorporation of phosphate into starch-like phospho-alpha-glucan, mostly at the C-3 position of glucose units. May be required for starch degradation, suggesting that the phosphate content of starch regulates its degradability. The chain is Phosphoglucan, water dikinase, chloroplastic (GWD3) from Oryza sativa subsp. japonica (Rice).